Reading from the N-terminus, the 373-residue chain is Queuine tRNA-ribosyltransferase (373 aa).

The active-site Proton acceptor is aspartate 90. Substrate contacts are provided by residues 90–94, aspartate 144, glutamine 193, and glycine 220; that span reads DSGGF. The interval 251 to 257 is RNA binding; that stretch reads GVGTPED. Aspartate 270 (nucleophile) is an active-site residue. The interval 275 to 279 is RNA binding; important for wobble base 34 recognition; sequence TRNAR. Residues cysteine 308, cysteine 310, cysteine 313, and histidine 339 each coordinate Zn(2+).

This sequence belongs to the queuine tRNA-ribosyltransferase family. Homodimer. Within each dimer, one monomer is responsible for RNA recognition and catalysis, while the other monomer binds to the replacement base PreQ1. The cofactor is Zn(2+).

It catalyses the reaction 7-aminomethyl-7-carbaguanine + guanosine(34) in tRNA = 7-aminomethyl-7-carbaguanosine(34) in tRNA + guanine. The protein operates within tRNA modification; tRNA-queuosine biosynthesis. Functionally, catalyzes the base-exchange of a guanine (G) residue with the queuine precursor 7-aminomethyl-7-deazaguanine (PreQ1) at position 34 (anticodon wobble position) in tRNAs with GU(N) anticodons (tRNA-Asp, -Asn, -His and -Tyr). Catalysis occurs through a double-displacement mechanism. The nucleophile active site attacks the C1' of nucleotide 34 to detach the guanine base from the RNA, forming a covalent enzyme-RNA intermediate. The proton acceptor active site deprotonates the incoming PreQ1, allowing a nucleophilic attack on the C1' of the ribose to form the product. After dissociation, two additional enzymatic reactions on the tRNA convert PreQ1 to queuine (Q), resulting in the hypermodified nucleoside queuosine (7-(((4,5-cis-dihydroxy-2-cyclopenten-1-yl)amino)methyl)-7-deazaguanosine). This chain is Queuine tRNA-ribosyltransferase, found in Campylobacter jejuni subsp. jejuni serotype O:6 (strain 81116 / NCTC 11828).